A 504-amino-acid chain; its full sequence is ATP synthase subunit alpha (504 aa).

Residue 169 to 176 coordinates ATP; sequence GDRKTGKT.

The protein belongs to the ATPase alpha/beta chains family. F-type ATPases have 2 components, CF(1) - the catalytic core - and CF(0) - the membrane proton channel. CF(1) has five subunits: alpha(3), beta(3), gamma(1), delta(1), epsilon(1). CF(0) has three main subunits: a(1), b(2) and c(9-12). The alpha and beta chains form an alternating ring which encloses part of the gamma chain. CF(1) is attached to CF(0) by a central stalk formed by the gamma and epsilon chains, while a peripheral stalk is formed by the delta and b chains.

The protein localises to the cell membrane. It carries out the reaction ATP + H2O + 4 H(+)(in) = ADP + phosphate + 5 H(+)(out). In terms of biological role, produces ATP from ADP in the presence of a proton gradient across the membrane. The alpha chain is a regulatory subunit. The chain is ATP synthase subunit alpha from Lactiplantibacillus plantarum (strain ATCC BAA-793 / NCIMB 8826 / WCFS1) (Lactobacillus plantarum).